The sequence spans 79 residues: MGFSTTHLLIFLVIIIVIFGTKKLRNIGSDLGGAVKGFKDGMKEGSDKAADAPAAAPQQVASSATAAKETIDVEAKTKA.

A helical membrane pass occupies residues 1-21 (MGFSTTHLLIFLVIIIVIFGT). A disordered region spans residues 43–63 (KEGSDKAADAPAAAPQQVASS). The span at 51–63 (DAPAAAPQQVASS) shows a compositional bias: low complexity.

The protein belongs to the TatA/E family. The Tat system comprises two distinct complexes: a TatABC complex, containing multiple copies of TatA, TatB and TatC subunits, and a separate TatA complex, containing only TatA subunits. Substrates initially bind to the TatABC complex, which probably triggers association of the separate TatA complex to form the active translocon.

Its subcellular location is the cell inner membrane. In terms of biological role, part of the twin-arginine translocation (Tat) system that transports large folded proteins containing a characteristic twin-arginine motif in their signal peptide across membranes. TatA could form the protein-conducting channel of the Tat system. The protein is Sec-independent protein translocase protein TatA of Albidiferax ferrireducens (strain ATCC BAA-621 / DSM 15236 / T118) (Rhodoferax ferrireducens).